We begin with the raw amino-acid sequence, 492 residues long: MKKVILSVSDKSGIVDFAKSLVGLDYELYSTGGTKRALDEAGVPVKSVSDLTQFDEIMDGRVKTLHPAVHGGILADRDKPEHLQQLKDKGIDLIDIVVVNLYPFKETVANPDVTEMDAIENIDIGGPTMLRAAAKNFKHVTTIVDPSDYDEVIEHIKNDSLDETFRKSLMIKVFEHTNDYDNAIVNFFKENKEPLRYGENPQQDAYFVRTSDAPNTIAGAKQLHGKQLSFNNIKDADATLALAKKFEEPAAVAVKHMNPCGVGVGSSIEEAFQNAYDADSQSIFGGIVAVNRPVTKELAEKLHSIFLEVVIAPSFTEEALEVLTKKKNIRLLEVEMTVDHDEKEYVSVSGGYLVQDKDTKTISRDDMKVVTKAEPTEEQWKAMELGWKVVPSVKSNAIILSNDHQTVGIGAGQMNRVGSAEIAIERAIEINDNVALVSDGFFPMDDTVELAAKAGIKAIIQPGGSIKDQDSIDMADKHGIAMVMTGVRHFKH.

The 144-residue stretch at 1–144 (MKKVILSVSD…KNFKHVTTIV (144 aa)) folds into the MGS-like domain.

It belongs to the PurH family.

It catalyses the reaction (6R)-10-formyltetrahydrofolate + 5-amino-1-(5-phospho-beta-D-ribosyl)imidazole-4-carboxamide = 5-formamido-1-(5-phospho-D-ribosyl)imidazole-4-carboxamide + (6S)-5,6,7,8-tetrahydrofolate. The catalysed reaction is IMP + H2O = 5-formamido-1-(5-phospho-D-ribosyl)imidazole-4-carboxamide. Its pathway is purine metabolism; IMP biosynthesis via de novo pathway; 5-formamido-1-(5-phospho-D-ribosyl)imidazole-4-carboxamide from 5-amino-1-(5-phospho-D-ribosyl)imidazole-4-carboxamide (10-formyl THF route): step 1/1. It participates in purine metabolism; IMP biosynthesis via de novo pathway; IMP from 5-formamido-1-(5-phospho-D-ribosyl)imidazole-4-carboxamide: step 1/1. The chain is Bifunctional purine biosynthesis protein PurH from Staphylococcus carnosus (strain TM300).